The following is a 78-amino-acid chain: 4-methyl-3-hydroxyanthranilic acid carrier protein (78 aa).

O-(pantetheine 4'-phosphoryl)serine is present on serine 33.

It belongs to the acyl carrier protein (ACP) family. 4'-phosphopantetheine is transferred from CoA to a specific serine of the apo-form of this carrier protein.

It participates in antibiotic biosynthesis. Involved in the biosynthesis of actinomycin. Acts as a carrier in the transfer and thioesterification of 4-methyl-3-hydroxyanthranilic acid (4-MHA). This Streptomyces anulatus (Streptomyces chrysomallus) protein is 4-methyl-3-hydroxyanthranilic acid carrier protein.